Consider the following 571-residue polypeptide: Proline--tRNA ligase (571 aa).

The protein belongs to the class-II aminoacyl-tRNA synthetase family. ProS type 1 subfamily. Homodimer.

It is found in the cytoplasm. It catalyses the reaction tRNA(Pro) + L-proline + ATP = L-prolyl-tRNA(Pro) + AMP + diphosphate. In terms of biological role, catalyzes the attachment of proline to tRNA(Pro) in a two-step reaction: proline is first activated by ATP to form Pro-AMP and then transferred to the acceptor end of tRNA(Pro). As ProRS can inadvertently accommodate and process non-cognate amino acids such as alanine and cysteine, to avoid such errors it has two additional distinct editing activities against alanine. One activity is designated as 'pretransfer' editing and involves the tRNA(Pro)-independent hydrolysis of activated Ala-AMP. The other activity is designated 'posttransfer' editing and involves deacylation of mischarged Ala-tRNA(Pro). The misacylated Cys-tRNA(Pro) is not edited by ProRS. This chain is Proline--tRNA ligase, found in Actinobacillus pleuropneumoniae serotype 7 (strain AP76).